A 183-amino-acid polypeptide reads, in one-letter code: UPF0725 protein At4g11700 (183 aa).

The protein belongs to the UPF0725 (EMB2204) family.

The sequence is that of UPF0725 protein At4g11700 from Arabidopsis thaliana (Mouse-ear cress).